The chain runs to 100 residues: Urease subunit gamma (100 aa).

This sequence belongs to the urease gamma subunit family. In terms of assembly, heterotrimer of UreA (gamma), UreB (beta) and UreC (alpha) subunits. Three heterotrimers associate to form the active enzyme.

The protein resides in the cytoplasm. It catalyses the reaction urea + 2 H2O + H(+) = hydrogencarbonate + 2 NH4(+). It functions in the pathway nitrogen metabolism; urea degradation; CO(2) and NH(3) from urea (urease route): step 1/1. This chain is Urease subunit gamma, found in Chromohalobacter salexigens (strain ATCC BAA-138 / DSM 3043 / CIP 106854 / NCIMB 13768 / 1H11).